Consider the following 223-residue polypeptide: UPF0758 protein FMG_0357 (223 aa).

An MPN domain is found at 101 to 223 (SLNDPDSVAE…SLSMRKGMYF (123 aa)). Zn(2+) contacts are provided by His172, His174, and Asp185. The short motif at 172–185 (HNHPSGSLIPSNAD) is the JAMM motif element.

This sequence belongs to the UPF0758 family.

The sequence is that of UPF0758 protein FMG_0357 from Finegoldia magna (strain ATCC 29328 / DSM 20472 / WAL 2508) (Peptostreptococcus magnus).